Consider the following 662-residue polypeptide: MNQFKVISKFNPTGDQPKAIKSIAKGIEKGEKFQTLIGVTGSGKTFTMANIIEKVQKPTLVLAHNKTLAAQLCSEFREFFPNNAVEYFVSYYDYYQPEAYVAQSDTYIEKDASINDEIDKLRHSATSALFERKDVIIVASVSCIYGLGNPEEYKKLTISLREGMEKDRDEIIKKLVEIQYERNDIDFSRGTFRVKGDVLDIFPASSSSKAVRIEFFGDEIDRIKEFDVLTGETITKLKHISIFPASHFATSKDRLEIAIKNIEEELEERVKELVSQDKILEAQRLKQRTNFDIEMMREVGYCTGIENYSRVLDGRAKGTPPQTLLDYFPQDFLLFIDESHVTLPQVKAMQAGDKSRKDSLVEYGFRLPCAYDNRPLTFKEFENKLNQVVFVSATPAKYELEYSANTAEQVIRPTGLLDPEIIVKPVKGQIDDLYTSIQETIKRGFRILVTTLTKKMAEDLTDYLKEMGVKTRYLHSDIDTIERMKIIHDLRKGEFHVLVGINLLREGLDIPEVALVTILDADKEGFLRSETSLIQTVGRAARNSESKVIMYGDVITKSMEKTIRETNRRRKIQMEHNEKHGIVPKTIIKDIREVIQISDIAEERKEYDNLNEALKSYNNDIDKLIEKYEEEMKEAAQNLQFEKAAHLRDVIYKLKRDKETEL.

In terms of domain architecture, Helicase ATP-binding spans K25–R182. G38–T45 contributes to the ATP binding site. The short motif at Y91–I114 is the Beta-hairpin element. Residues Q429–I595 enclose the Helicase C-terminal domain. Residues D622–D657 enclose the UVR domain.

The protein belongs to the UvrB family. As to quaternary structure, forms a heterotetramer with UvrA during the search for lesions. Interacts with UvrC in an incision complex.

The protein localises to the cytoplasm. Functionally, the UvrABC repair system catalyzes the recognition and processing of DNA lesions. A damage recognition complex composed of 2 UvrA and 2 UvrB subunits scans DNA for abnormalities. Upon binding of the UvrA(2)B(2) complex to a putative damaged site, the DNA wraps around one UvrB monomer. DNA wrap is dependent on ATP binding by UvrB and probably causes local melting of the DNA helix, facilitating insertion of UvrB beta-hairpin between the DNA strands. Then UvrB probes one DNA strand for the presence of a lesion. If a lesion is found the UvrA subunits dissociate and the UvrB-DNA preincision complex is formed. This complex is subsequently bound by UvrC and the second UvrB is released. If no lesion is found, the DNA wraps around the other UvrB subunit that will check the other stand for damage. This Clostridium botulinum (strain Loch Maree / Type A3) protein is UvrABC system protein B.